Reading from the N-terminus, the 208-residue chain is N-(5'-phosphoribosyl)anthranilate isomerase (208 aa).

The protein belongs to the TrpF family.

The enzyme catalyses N-(5-phospho-beta-D-ribosyl)anthranilate = 1-(2-carboxyphenylamino)-1-deoxy-D-ribulose 5-phosphate. The protein operates within amino-acid biosynthesis; L-tryptophan biosynthesis; L-tryptophan from chorismate: step 3/5. The chain is N-(5'-phosphoribosyl)anthranilate isomerase from Methanothrix thermoacetophila (strain DSM 6194 / JCM 14653 / NBRC 101360 / PT) (Methanosaeta thermophila).